The following is a 188-amino-acid chain: Putative manganese efflux pump MntP (188 aa).

The next 6 membrane-spanning stretches (helical) occupy residues Phe3 to Ala23, Ile35 to Val55, Phe63 to Met83, Val107 to Met127, Ile131 to Ala151, and Ala167 to Ile187.

This sequence belongs to the MntP (TC 9.B.29) family.

It is found in the cell inner membrane. Functionally, probably functions as a manganese efflux pump. The protein is Putative manganese efflux pump MntP of Neisseria meningitidis serogroup A / serotype 4A (strain DSM 15465 / Z2491).